Consider the following 319-residue polypeptide: Cobalamin biosynthesis protein CbiB (319 aa).

A run of 5 helical transmembrane segments spans residues V56–A76, W82–A102, V153–A173, V204–C224, and L296–S316.

The protein belongs to the CobD/CbiB family.

Its subcellular location is the cell membrane. Its pathway is cofactor biosynthesis; adenosylcobalamin biosynthesis. Functionally, converts cobyric acid to cobinamide by the addition of aminopropanol on the F carboxylic group. However, the true cosubstrate could be (R)-1-amino-2-propanol O-2-phosphate, leading to cobinamide phosphate. The protein is Cobalamin biosynthesis protein CbiB of Salmonella paratyphi B (strain ATCC BAA-1250 / SPB7).